We begin with the raw amino-acid sequence, 390 residues long: NADH-quinone oxidoreductase subunit D (390 aa).

This sequence belongs to the complex I 49 kDa subunit family. In terms of assembly, NDH-1 is composed of 14 different subunits. Subunits NuoB, C, D, E, F, and G constitute the peripheral sector of the complex.

Its subcellular location is the cell inner membrane. It carries out the reaction a quinone + NADH + 5 H(+)(in) = a quinol + NAD(+) + 4 H(+)(out). NDH-1 shuttles electrons from NADH, via FMN and iron-sulfur (Fe-S) centers, to quinones in the respiratory chain. The immediate electron acceptor for the enzyme in this species is believed to be ubiquinone. Couples the redox reaction to proton translocation (for every two electrons transferred, four hydrogen ions are translocated across the cytoplasmic membrane), and thus conserves the redox energy in a proton gradient. This Geobacter metallireducens (strain ATCC 53774 / DSM 7210 / GS-15) protein is NADH-quinone oxidoreductase subunit D.